The sequence spans 768 residues: Translation initiation factor IF-2, chloroplastic (768 aa).

3 disordered regions span residues 1–20 (MFLNNQNFENRSSRSSSNIN), 54–77 (KSESHTGGEQHLELSSPPKLDKKS), and 155–176 (KKVAVTPSQNSASIQSNSPPES). The segment covering 54–65 (KSESHTGGEQHL) has biased composition (basic and acidic residues). Positions 160–176 (TPSQNSASIQSNSPPES) are enriched in polar residues. The region spanning 261 to 434 (KRPPIVTVMG…TLLAELEDLK (174 aa)) is the tr-type G domain. GTP contacts are provided by residues 270–277 (GHVDHGKT), 320–324 (DTPGH), and 374–377 (SKID).

This sequence belongs to the TRAFAC class translation factor GTPase superfamily. Classic translation factor GTPase family. IF-2 subfamily.

The protein resides in the plastid. The protein localises to the chloroplast. One of the essential components for the initiation of protein synthesis. Protects formylmethionyl-tRNA from spontaneous hydrolysis and promotes its binding to the 30S ribosomal subunits. Also involved in the hydrolysis of GTP during the formation of the 70S ribosomal complex. The protein is Translation initiation factor IF-2, chloroplastic (infB) of Pyropia yezoensis (Susabi-nori).